Here is a 324-residue protein sequence, read N- to C-terminus: Cuticle collagen sqt-1 (324 aa).

2 disordered regions span residues 68 to 108 (RRQY…TPNG) and 129 to 324 (SGPK…YRNI). A compositionally biased stretch (pro residues) spans 87–97 (SAPPGQPPAVP). 3 triple-helical region regions span residues 127 to 153 (GPSG…PGVG), 171 to 231 (QGPV…KGRD), and 237 to 299 (GRPG…PGKD). Low complexity-rich tracts occupy residues 129–156 (SGPK…GADD) and 177–201 (PGAL…PGRD). The span at 227–236 (EKGRDAEHPI) shows a compositional bias: basic and acidic residues.

Belongs to the cuticular collagen family. In terms of assembly, collagen polypeptide chains are complexed within the cuticle by disulfide bonds and other types of covalent cross-links.

In terms of biological role, nematode cuticles are composed largely of collagen-like proteins. The cuticle functions both as an exoskeleton and as a barrier to protect the worm from its environment. This is a collagen critical for organismal morphogenesis. Mutations in sqt-1 can lengthen, shorten, or helically twist the entire animal. In Caenorhabditis elegans, this protein is Cuticle collagen sqt-1 (sqt-1).